A 465-amino-acid chain; its full sequence is Ran-binding protein 3-like (465 aa).

In terms of domain architecture, RanBD1 spans 276–417; the sequence is SQPSRKCLLE…ALQSFNKQRD (142 aa).

Interacts with SMAD1, SMAD5 and SMAD8; the interaction (with SMAD at least) increases when SMAD1 is not phosphorylated and mediates SMAD1 nuclear export.

Its subcellular location is the nucleus. It is found in the cytoplasm. In terms of biological role, nuclear export factor for BMP-specific SMAD1/5/8 that plays a critical role in terminating BMP signaling and regulating mesenchymal stem cell differentiation by blocking osteoblast differentiation to promote myogenic differention. Directly recognizes dephosphorylated SMAD1/5/8 and mediates their nuclear export in a Ran-dependent manner. The chain is Ran-binding protein 3-like (RANBP3L) from Homo sapiens (Human).